The following is a 603-amino-acid chain: Glutamyl-tRNA(Gln) amidotransferase subunit E (603 aa).

This sequence belongs to the GatB/GatE family. GatE subfamily. As to quaternary structure, heterodimer of GatD and GatE.

It catalyses the reaction L-glutamyl-tRNA(Gln) + L-glutamine + ATP + H2O = L-glutaminyl-tRNA(Gln) + L-glutamate + ADP + phosphate + H(+). Its function is as follows. Allows the formation of correctly charged Gln-tRNA(Gln) through the transamidation of misacylated Glu-tRNA(Gln) in organisms which lack glutaminyl-tRNA synthetase. The reaction takes place in the presence of glutamine and ATP through an activated gamma-phospho-Glu-tRNA(Gln). The GatDE system is specific for glutamate and does not act on aspartate. The chain is Glutamyl-tRNA(Gln) amidotransferase subunit E from Thermoplasma acidophilum (strain ATCC 25905 / DSM 1728 / JCM 9062 / NBRC 15155 / AMRC-C165).